A 135-amino-acid polypeptide reads, in one-letter code: D-ribose pyranase (135 aa).

The Proton donor role is filled by His20. Substrate-binding positions include Asp28, His102, and Tyr124–Asn126.

The protein belongs to the RbsD / FucU family. RbsD subfamily. As to quaternary structure, homodecamer.

Its subcellular location is the cytoplasm. It carries out the reaction beta-D-ribopyranose = beta-D-ribofuranose. It participates in carbohydrate metabolism; D-ribose degradation; D-ribose 5-phosphate from beta-D-ribopyranose: step 1/2. In terms of biological role, catalyzes the interconversion of beta-pyran and beta-furan forms of D-ribose. This Thermotoga maritima (strain ATCC 43589 / DSM 3109 / JCM 10099 / NBRC 100826 / MSB8) protein is D-ribose pyranase.